The chain runs to 260 residues: Ras-related protein Rab-32B (260 aa).

Positions 11-50 (FDTDPDVSTDSNYNNNNNSNNNNSIISNSNNNNNNNNNNV) are disordered. Over residues 21 to 49 (SNYNNNNNSNNNNSIISNSNNNNNNNNNN) the composition is skewed to low complexity. 66-73 (GDYAVGKS) is a GTP binding site. An Effector region motif is present at residues 88–96 (YKLTIGVDF). GTP-binding positions include 115–119 (DIAGH) and 177–180 (NKSD). A disordered region spans residues 231-260 (TNHPPKPEEDTLELTKTNGEKSDDSKSCCK). A compositionally biased stretch (basic and acidic residues) spans 248-260 (NGEKSDDSKSCCK). 2 S-geranylgeranyl cysteine lipidation sites follow: cysteine 258 and cysteine 259.

Belongs to the small GTPase superfamily. Rab family.

The polypeptide is Ras-related protein Rab-32B (rab32B) (Dictyostelium discoideum (Social amoeba)).